The following is a 363-amino-acid chain: Aminomethyltransferase (363 aa).

Belongs to the GcvT family. In terms of assembly, the glycine cleavage system is composed of four proteins: P, T, L and H.

It catalyses the reaction N(6)-[(R)-S(8)-aminomethyldihydrolipoyl]-L-lysyl-[protein] + (6S)-5,6,7,8-tetrahydrofolate = N(6)-[(R)-dihydrolipoyl]-L-lysyl-[protein] + (6R)-5,10-methylene-5,6,7,8-tetrahydrofolate + NH4(+). In terms of biological role, the glycine cleavage system catalyzes the degradation of glycine. In Staphylococcus haemolyticus (strain JCSC1435), this protein is Aminomethyltransferase.